Here is a 197-residue protein sequence, read N- to C-terminus: Probable GTP-binding protein EngB (197 aa).

The 174-residue stretch at 22–195 (QLPELALAGR…WRTILNHLKV (174 aa)) folds into the EngB-type G domain. GTP is bound by residues 30 to 37 (GRSNVGKS), 57 to 61 (GKTQT), 75 to 78 (DVPG), 142 to 145 (TKAD), and 174 to 176 (FSS). Mg(2+) contacts are provided by Ser37 and Thr59.

It belongs to the TRAFAC class TrmE-Era-EngA-EngB-Septin-like GTPase superfamily. EngB GTPase family. It depends on Mg(2+) as a cofactor.

Functionally, necessary for normal cell division and for the maintenance of normal septation. This Shouchella clausii (strain KSM-K16) (Alkalihalobacillus clausii) protein is Probable GTP-binding protein EngB.